Reading from the N-terminus, the 32-residue chain is Cruzioseptin-9 (32 aa).

A Glutamine amide modification is found at glutamine 29. Residues 31–32 constitute a propeptide that is removed on maturation; sequence EQ.

In terms of tissue distribution, expressed by the skin glands.

It is found in the secreted. Its function is as follows. Has antimicrobial activity. The chain is Cruzioseptin-9 from Cruziohyla calcarifer (Splendid leaf frog).